A 331-amino-acid polypeptide reads, in one-letter code: Ketol-acid reductoisomerase (NADP(+)) (331 aa).

The 181-residue stretch at Met1–Thr181 folds into the KARI N-terminal Rossmann domain. NADP(+) contacts are provided by residues Tyr24 to Gln27, Arg47, Ser50, and Asp82 to Gln85. Residue His107 is part of the active site. An NADP(+)-binding site is contributed by Gly133. Residues Thr182 to Leu327 enclose the KARI C-terminal knotted domain. Mg(2+)-binding residues include Asp190, Glu194, Glu226, and Glu230. Ser251 contributes to the substrate binding site.

Belongs to the ketol-acid reductoisomerase family. Mg(2+) is required as a cofactor.

It carries out the reaction (2R)-2,3-dihydroxy-3-methylbutanoate + NADP(+) = (2S)-2-acetolactate + NADPH + H(+). The enzyme catalyses (2R,3R)-2,3-dihydroxy-3-methylpentanoate + NADP(+) = (S)-2-ethyl-2-hydroxy-3-oxobutanoate + NADPH + H(+). It functions in the pathway amino-acid biosynthesis; L-isoleucine biosynthesis; L-isoleucine from 2-oxobutanoate: step 2/4. The protein operates within amino-acid biosynthesis; L-valine biosynthesis; L-valine from pyruvate: step 2/4. Functionally, involved in the biosynthesis of branched-chain amino acids (BCAA). Catalyzes an alkyl-migration followed by a ketol-acid reduction of (S)-2-acetolactate (S2AL) to yield (R)-2,3-dihydroxy-isovalerate. In the isomerase reaction, S2AL is rearranged via a Mg-dependent methyl migration to produce 3-hydroxy-3-methyl-2-ketobutyrate (HMKB). In the reductase reaction, this 2-ketoacid undergoes a metal-dependent reduction by NADPH to yield (R)-2,3-dihydroxy-isovalerate. In Heliobacterium modesticaldum (strain ATCC 51547 / Ice1), this protein is Ketol-acid reductoisomerase (NADP(+)).